The sequence spans 450 residues: Phosphoglucosamine mutase (450 aa).

Catalysis depends on serine 104, which acts as the Phosphoserine intermediate. Mg(2+)-binding residues include serine 104, aspartate 245, aspartate 247, and aspartate 249. Residue serine 104 is modified to Phosphoserine.

The protein belongs to the phosphohexose mutase family. It depends on Mg(2+) as a cofactor. Activated by phosphorylation.

The enzyme catalyses alpha-D-glucosamine 1-phosphate = D-glucosamine 6-phosphate. Catalyzes the conversion of glucosamine-6-phosphate to glucosamine-1-phosphate. The polypeptide is Phosphoglucosamine mutase (Phenylobacterium zucineum (strain HLK1)).